The chain runs to 294 residues: Homeobox-leucine zipper protein ATHB-13 (294 aa).

The segment at residues 82-141 is a DNA-binding region (homeobox); it reads MGEKKRRLNMEQVKTLEKNFELGNKLEPERKMQLARALGLQPRQIAIWFQNRRARWKTKQ. The interval 142-177 is leucine-zipper; that stretch reads LEKDYDTLKRQFDTLKAENDLLQTHNQKLQAEIMGL. The disordered stretch occupies residues 181–246; the sequence is EQTESINLNK…FFPPSPATAT (66 aa). Residues 197 to 210 show a composition bias toward low complexity; it reads SNRSDNSSDNLRLD. Positions 214–223 are enriched in polar residues; that stretch reads APPSNDSTLT.

This sequence belongs to the HD-ZIP homeobox family. Class I subfamily. As to expression, predominantly expressed in leaves and flowers.

The protein localises to the nucleus. Its function is as follows. Probable transcription factor that may act in the sucrose-signaling pathway. In Arabidopsis thaliana (Mouse-ear cress), this protein is Homeobox-leucine zipper protein ATHB-13 (ATHB-13).